Here is a 755-residue protein sequence, read N- to C-terminus: Leucine-rich repeat-containing protein 36 (755 aa).

LRR repeat units follow at residues 51–72 (SLRSLDLSRNLITSLKGIQYLC) and 73–94 (SLQELNLYYNNIPSLVEVSRLQ). Positions 107-146 (NPVVRKDTDYRLFAVYTLQTLEKLDDRAVRDSERRAAKLH) constitute an LRRCT domain. Disordered stretches follow at residues 354-374 (GKNYREHSIKPSQDKKATTSH) and 448-517 (LPPG…PPIS). Over residues 356–370 (NYREHSIKPSQDKKA) the composition is skewed to basic and acidic residues. The span at 498 to 510 (LSSDLGSLHGLSG) shows a compositional bias: low complexity. The stretch at 601 to 671 (VESLKQKLVK…ELTQLKRLEE (71 aa)) forms a coiled coil. The disordered stretch occupies residues 701–755 (YSGKSLLPPEKSHPLGRSSPFGKSTLSSSSPMVHDTGQYLIQSVSEADPEPSLWS). The span at 721 to 731 (FGKSTLSSSSP) shows a compositional bias: polar residues.

This Mus musculus (Mouse) protein is Leucine-rich repeat-containing protein 36 (Lrrc36).